A 946-amino-acid polypeptide reads, in one-letter code: MTLVLFATEYDSAHIVANVLSQTPTDHCVFPLLVKHQVSRRVYFCLQTQKCSDSRRVAPVFAVNNETLQLSRYLAARQPIPLSALIASLDEAETQPLYRHLFRTPVLSPEHGGEVREFKHLVYFHHAAVLRHLNQVFLCPTSPSWFISVFGHTEGQVLLTMAYYLFEGQYSTISTVEEYVRSFCTRDLGTIIPTHASMGEFARLLLGSPFRQRVSAFVAYAVARNRRDYTELEQVDTQINAFRERARLPDTVCVHYVYLAYRTALARARLLEYRRVVAYDADAAPEAQCTREPGFLGRRLSTELLDVMQKYFSLDNFLHDYVETHLLRLDESPHSATSPHGLGLAGYGGRIDGTHLAGFFGTSTQLARQLERINTLSESVFSPLERSLSGLLRLCASLRTAQTYTTGTLTRYSQRRYLLPEPALAPLLERPLPVYRVHLPNDQHVFCAVASETWHRSLFPRDLLRHVPDSRFSDEALTETVWLHDDDVASTSPETQFYYTRHEVFNERLPVFNFVADFDLRLRDGVSGLARHTVFELCRGLRRVWMTVWASLFGYTHPDRHPVYFFKSACPPNSVPVDAAGAPFDDDDYLDYRDERDTEEDEDGKEDKNNVPDNGVFQKTTSSVDTSPPYCRCKGKLGLRIITPFPACTVAVHPSVLRAVAQVLNHAVCLDAELHTLLDPISHPESSLDTGIYHHGRSVRLPYMYKMDQDDGYFMHRRLLPLFIVPDAYREHPLGFVRAQLDLRNLLHHHPPHDLPALPLSPPPRVILSVRDKICPSTEANFIETRSLNVTRYRRRGLTEVLAYHLYGGDGATAAAISDTDLQRLVVTRVWPPLLEHLTQHYEPHVSEQFTAPHVLLFQPHGACCVAVKRRDGARTRDFRCLNYTHRNPQETVQVFIDLRTEHSYALWASLWSRCFTKKCHSNAKNVHISIKIRPPDAPVPPATAV.

The segment at 596–626 is disordered; it reads RDTEEDEDGKEDKNNVPDNGVFQKTTSSVDT. The segment covering 617–626 has biased composition (polar residues); that stretch reads FQKTTSSVDT. Residues 881–920 form a CHC2-type zinc finger; it reads CLNYTHRNPQETVQVFIDLRTEHSYALWASLWSRCFTKKC.

The protein belongs to the herpesviridae DNA primase family. As to quaternary structure, associates with the helicase and the primase-associated factor to form the helicase-primase factor.

It is found in the host nucleus. Essential component of the helicase/primase complex. Unwinds the DNA at the replication forks and generates single-stranded DNA for both leading and lagging strand synthesis. The primase initiates primer synthesis and thereby produces large amount of short RNA primers on the lagging strand that the polymerase elongates using dNTPs. In Human cytomegalovirus (strain AD169) (HHV-5), this protein is DNA primase (UL70).